The primary structure comprises 604 residues: Netrin-1 (604 aa).

A signal peptide spans 1-24; it reads MMRAVWEALAALAAVACLVGAVRG. The Laminin N-terminal domain occupies 47–284; it reads HPRRCIPDFV…AVSDLQVGGR (238 aa). Asparagine 95, asparagine 116, and asparagine 131 each carry an N-linked (GlcNAc...) asparagine glycan. Intrachain disulfides connect cysteine 119–cysteine 152, cysteine 285–cysteine 294, cysteine 287–cysteine 304, cysteine 306–cysteine 315, cysteine 318–cysteine 338, cysteine 341–cysteine 350, cysteine 343–cysteine 368, cysteine 371–cysteine 380, cysteine 383–cysteine 401, cysteine 404–cysteine 416, cysteine 406–cysteine 423, cysteine 425–cysteine 434, cysteine 437–cysteine 451, cysteine 472–residue 544, and cysteine 491–cysteine 601. 3 consecutive Laminin EGF-like domains span residues 285-340, 341-403, and 404-453; these read CKCN…ECVA, CNCN…ACKA, and CDCH…PCIK. The N-linked (GlcNAc...) asparagine glycan is linked to asparagine 417. The NTR domain maps to 472–601; sequence CDSYCKASKG…FQQREKKGKC (130 aa). The short motif at 530–532 is the Cell attachment site element; sequence RGD.

In terms of assembly, binds to its receptors; DCC, UNC5A, UNC5B, UNC5C and probably UNC5D. Binds to its receptor; DSCAM. Interacts with APP.

The protein resides in the secreted. It localises to the cytoplasm. Functionally, netrins control guidance of CNS commissural axons and peripheral motor axons. Its association with either DCC or some UNC5 receptors will lead to axon attraction or repulsion, respectively. Binding to UNC5C might cause dissociation of UNC5C from polymerized TUBB3 in microtubules and thereby lead to increased microtubule dynamics and axon repulsion. Involved in dorsal root ganglion axon projection towards the spinal cord. It also serves as a survival factor via its association with its receptors which prevent the initiation of apoptosis. Involved in colorectal tumorigenesis by regulating apoptosis. This chain is Netrin-1 (Ntn1), found in Rattus norvegicus (Rat).